The chain runs to 334 residues: Protein CapI (334 aa).

Ser126 contributes to the substrate binding site. The active-site Proton acceptor is Tyr151.

It belongs to the NAD(P)-dependent epimerase/dehydratase family.

Its pathway is capsule biogenesis; capsule polysaccharide biosynthesis. Its function is as follows. Required for the biosynthesis of type 1 capsular polysaccharide. This is Protein CapI (capI) from Staphylococcus aureus.